A 236-amino-acid chain; its full sequence is Small ribosomal subunit protein uS2c (236 aa).

It belongs to the universal ribosomal protein uS2 family.

The protein resides in the plastid. It localises to the chloroplast. This Manihot esculenta (Cassava) protein is Small ribosomal subunit protein uS2c (rps2).